Reading from the N-terminus, the 37-residue chain is Large ribosomal subunit protein bL36 (37 aa).

The protein belongs to the bacterial ribosomal protein bL36 family.

The sequence is that of Large ribosomal subunit protein bL36 from Staphylococcus epidermidis (strain ATCC 35984 / DSM 28319 / BCRC 17069 / CCUG 31568 / BM 3577 / RP62A).